A 158-amino-acid chain; its full sequence is Small ribosomal subunit protein uS7 (158 aa).

It belongs to the universal ribosomal protein uS7 family. In terms of assembly, part of the 30S ribosomal subunit. Contacts proteins S9 and S11.

Its function is as follows. One of the primary rRNA binding proteins, it binds directly to 16S rRNA where it nucleates assembly of the head domain of the 30S subunit. Is located at the subunit interface close to the decoding center, probably blocks exit of the E-site tRNA. This Leptospira biflexa protein is Small ribosomal subunit protein uS7.